A 513-amino-acid chain; its full sequence is Bifunctional purine biosynthesis protein PurH (513 aa).

The MGS-like domain maps to 1 to 147 (MIQIKRALVS…KNHKNVVVLT (147 aa)).

It belongs to the PurH family.

The catalysed reaction is (6R)-10-formyltetrahydrofolate + 5-amino-1-(5-phospho-beta-D-ribosyl)imidazole-4-carboxamide = 5-formamido-1-(5-phospho-D-ribosyl)imidazole-4-carboxamide + (6S)-5,6,7,8-tetrahydrofolate. It catalyses the reaction IMP + H2O = 5-formamido-1-(5-phospho-D-ribosyl)imidazole-4-carboxamide. It participates in purine metabolism; IMP biosynthesis via de novo pathway; 5-formamido-1-(5-phospho-D-ribosyl)imidazole-4-carboxamide from 5-amino-1-(5-phospho-D-ribosyl)imidazole-4-carboxamide (10-formyl THF route): step 1/1. It functions in the pathway purine metabolism; IMP biosynthesis via de novo pathway; IMP from 5-formamido-1-(5-phospho-D-ribosyl)imidazole-4-carboxamide: step 1/1. This Leptospira biflexa serovar Patoc (strain Patoc 1 / Ames) protein is Bifunctional purine biosynthesis protein PurH.